A 1150-amino-acid chain; its full sequence is DNA polymerase (1150 aa).

The disordered stretch occupies residues 1–53; it reads MSLVQGHGTSGLFTEPPNPINQQESSGPSLPAQDAAQAFASSPRAGATSTIVN.

This sequence belongs to the DNA polymerase type-B family. Heterodimer with the terminal protein; this heterodimer binds to bp 9 to 18 of the genome. Forms a complex with viral pTP, DBP and hosts NFIA and POU2F1/OCT1 for initiation of replication.

It localises to the host nucleus. It carries out the reaction DNA(n) + a 2'-deoxyribonucleoside 5'-triphosphate = DNA(n+1) + diphosphate. Eukaryotic-type DNA polymerase involved in viral genomic replication. DNA synthesis is protein primed, and acts in a strand displacement replication. Assembles in complex with viral pTP, DBP, host NFIA and host POU2F1/OCT1 on viral origin of replication. The polymerase covalently transfers dCMP onto pTP, thereby initiating complementary strand synthesis. The chain is DNA polymerase from Canis lupus familiaris (Dog).